Consider the following 233-residue polypeptide: Large ribosomal subunit protein uL1 (233 aa).

Belongs to the universal ribosomal protein uL1 family. Part of the 50S ribosomal subunit.

Functionally, binds directly to 23S rRNA. The L1 stalk is quite mobile in the ribosome, and is involved in E site tRNA release. In terms of biological role, protein L1 is also a translational repressor protein, it controls the translation of the L11 operon by binding to its mRNA. The polypeptide is Large ribosomal subunit protein uL1 (Novosphingobium aromaticivorans (strain ATCC 700278 / DSM 12444 / CCUG 56034 / CIP 105152 / NBRC 16084 / F199)).